The primary structure comprises 269 residues: Formamidopyrimidine-DNA glycosylase (269 aa).

The active-site Schiff-base intermediate with DNA is the Pro-2. Catalysis depends on Glu-3, which acts as the Proton donor. Lys-57 functions as the Proton donor; for beta-elimination activity in the catalytic mechanism. Residues His-90, Arg-109, and Lys-150 each contribute to the DNA site. The FPG-type zinc-finger motif lies at 235–269 (QVYGKGGLPCPKCGTELAEVKIGQRATVYCSQCQQ). Arg-259 acts as the Proton donor; for delta-elimination activity in catalysis.

The protein belongs to the FPG family. As to quaternary structure, monomer. Zn(2+) is required as a cofactor.

It catalyses the reaction Hydrolysis of DNA containing ring-opened 7-methylguanine residues, releasing 2,6-diamino-4-hydroxy-5-(N-methyl)formamidopyrimidine.. The catalysed reaction is 2'-deoxyribonucleotide-(2'-deoxyribose 5'-phosphate)-2'-deoxyribonucleotide-DNA = a 3'-end 2'-deoxyribonucleotide-(2,3-dehydro-2,3-deoxyribose 5'-phosphate)-DNA + a 5'-end 5'-phospho-2'-deoxyribonucleoside-DNA + H(+). Involved in base excision repair of DNA damaged by oxidation or by mutagenic agents. Acts as a DNA glycosylase that recognizes and removes damaged bases. Has a preference for oxidized purines, such as 7,8-dihydro-8-oxoguanine (8-oxoG). Has AP (apurinic/apyrimidinic) lyase activity and introduces nicks in the DNA strand. Cleaves the DNA backbone by beta-delta elimination to generate a single-strand break at the site of the removed base with both 3'- and 5'-phosphates. The polypeptide is Formamidopyrimidine-DNA glycosylase (Photobacterium damsela subsp. piscicida (Pasteurella piscicida)).